The following is a 247-amino-acid chain: Complement C1q subcomponent subunit A (247 aa).

Residues 1–24 form the signal peptide; that stretch reads MEAPRGWLVIMISVLAVSLASSAA. A disordered region spans residues 26 to 116; the sequence is DTCRDLDGRD…NPGNIKDQRR (91 aa). Residues 27-38 are compositionally biased toward basic and acidic residues; it reads TCRDLDGRDGAA. The Collagen-like domain maps to 33 to 111; the sequence is GRDGAARKPG…KGIKGNPGNI (79 aa). A 4-hydroxyproline mark is found at P41 and P47. K50 carries the post-translational modification 5-hydroxylysine. K50 is a glycosylation site (O-linked (Gal...) hydroxylysine). 4-hydroxyproline is present on residues P56 and P59. Position 69 is a 5-hydroxylysine (K69). K69 is a glycosylation site (O-linked (Gal...) hydroxylysine). Residues P81 and P87 each carry the 4-hydroxyproline modification. Residues 98–109 are compositionally biased toward low complexity; sequence LPGLKGIKGNPG. K102 bears the 5-hydroxylysine mark. O-linked (Gal...) hydroxylysine glycosylation occurs at K102. Positions 112 to 247 constitute a C1q domain; it reads KDQRRPAFSA…FSGFLIFPST (136 aa). The cysteines at positions 174 and 192 are disulfide-linked. Q201 provides a ligand contact to Ca(2+).

As to quaternary structure, core component of the complement C1 complex, a calcium-dependent complex composed of 1 molecule of the C1Q subcomplex, 2 molecules of C1R and 2 molecules of C1S. The C1Q subcomplex is composed 18 subunits: 3 chains of C1QA, C1QB, and C1QC trimerize to form 6 collagen-like triple helices connected to six globular ligand-recognition modules (C1q domain). Interacts with CR1 (via Sushi 24 and Sushi 25 domains). Interacts (via C-terminus) with CD33; this interaction activates CD33 inhibitory motifs. In terms of processing, O-linked glycans are assumed to be the Glc-Gal disaccharides typically found as secondary modifications of hydroxylated lysines in collagen-like domains.

The protein localises to the secreted. It is found in the cell surface. With respect to regulation, the C1Q subcomplex is inhibited by sulfated molecules, such as triterpenoid sulfates, heparan sulfate, or chondroitin sulfates. In terms of biological role, core component of the complement C1 complex, a multiprotein complex that initiates the classical pathway of the complement system, a cascade of proteins that leads to phagocytosis and breakdown of pathogens and signaling that strengthens the adaptive immune system. The classical complement pathway is initiated by the C1Q subcomplex of the C1 complex, which specifically binds IgG or IgM immunoglobulins complexed with antigens, forming antigen-antibody complexes on the surface of pathogens: C1QA, together with C1QB and C1QC, specifically recognizes and binds the Fc regions of IgG or IgM via its C1q domain. Immunoglobulin-binding activates the proenzyme C1R, which cleaves C1S, initiating the proteolytic cascade of the complement system. The C1Q subcomplex is activated by a hexamer of IgG complexed with antigens, while it is activated by a pentameric IgM. The C1Q subcomplex also recognizes and binds phosphatidylserine exposed on the surface of cells undergoing programmed cell death, possibly promoting activation of the complement system. This Sus scrofa (Pig) protein is Complement C1q subcomponent subunit A (C1QA).